Reading from the N-terminus, the 83-residue chain is Large ribosomal subunit protein bL31B (83 aa).

It belongs to the bacterial ribosomal protein bL31 family. Type B subfamily. As to quaternary structure, part of the 50S ribosomal subunit.

The polypeptide is Large ribosomal subunit protein bL31B (Tropheryma whipplei (strain TW08/27) (Whipple's bacillus)).